Consider the following 164-residue polypeptide: Cytochrome c-type biogenesis protein CcmE (164 aa).

The Cytoplasmic segment spans residues 1 to 8; it reads MNPRRKSR. A helical; Signal-anchor for type II membrane protein membrane pass occupies residues 9 to 29; sequence LYLAIVVLIGVALTATLMLYA. Topologically, residues 30-164 are periplasmic; that stretch reads LRSNIDLFYT…ATPQNEGAKS (135 aa). Histidine 130 and tyrosine 134 together coordinate heme. Residues 131 to 148 show a composition bias toward basic and acidic residues; the sequence is DEKYTPPEVADAMKENHK. The segment at 131–164 is disordered; sequence DEKYTPPEVADAMKENHKGPASAYATPQNEGAKS. Residues 155-164 are compositionally biased toward polar residues; that stretch reads ATPQNEGAKS.

The protein belongs to the CcmE/CycJ family.

It is found in the cell inner membrane. Its function is as follows. Heme chaperone required for the biogenesis of c-type cytochromes. Transiently binds heme delivered by CcmC and transfers the heme to apo-cytochromes in a process facilitated by CcmF and CcmH. The chain is Cytochrome c-type biogenesis protein CcmE from Serratia proteamaculans (strain 568).